Here is a 374-residue protein sequence, read N- to C-terminus: Alcohol dehydrogenase class-3 (374 aa).

Ala-2 carries the N-acetylalanine modification. Positions 45, 67, 97, 100, 103, 111, and 174 each coordinate Zn(2+). Lys-233 bears the N6-succinyllysine mark. A Phosphoserine modification is found at Ser-247. Lys-315 is modified (N6-succinyllysine). Phosphoserine occurs at positions 324 and 351.

This sequence belongs to the zinc-containing alcohol dehydrogenase family. Class-III subfamily. Homodimer. Requires Zn(2+) as cofactor. In terms of tissue distribution, ubiquitous.

The protein resides in the cytoplasm. It carries out the reaction a primary alcohol + NAD(+) = an aldehyde + NADH + H(+). It catalyses the reaction a secondary alcohol + NAD(+) = a ketone + NADH + H(+). The catalysed reaction is S-(hydroxymethyl)glutathione + NADP(+) = S-formylglutathione + NADPH + H(+). The enzyme catalyses S-(hydroxymethyl)glutathione + NAD(+) = S-formylglutathione + NADH + H(+). It carries out the reaction 20-oxo-(5Z,8Z,11Z,14Z)-eicosatetraenoate + NAD(+) + H2O = (5Z,8Z,11Z,14Z)-eicosatetraenedioate + NADH + 2 H(+). It catalyses the reaction 20-hydroxy-(5Z,8Z,11Z,14Z)-eicosatetraenoate + NAD(+) = 20-oxo-(5Z,8Z,11Z,14Z)-eicosatetraenoate + NADH + H(+). The catalysed reaction is S-nitrosoglutathione + NADH + H(+) = S-(hydroxysulfenamide)glutathione + NAD(+). Functionally, catalyzes the oxidation of long-chain primary alcohols and the oxidation of S-(hydroxymethyl) glutathione. Also oxidizes long chain omega-hydroxy fatty acids, such as 20-HETE, producing both the intermediate aldehyde, 20-oxoarachidonate and the end product, a dicarboxylic acid, (5Z,8Z,11Z,14Z)-eicosatetraenedioate. Class-III ADH is remarkably ineffective in oxidizing ethanol. Required for clearance of cellular formaldehyde, a cytotoxic and carcinogenic metabolite that induces DNA damage. Also acts as a S-nitroso-glutathione reductase by catalyzing the NADH-dependent reduction of S-nitrosoglutathione, thereby regulating protein S-nitrosylation. In Mus musculus (Mouse), this protein is Alcohol dehydrogenase class-3.